Here is a 239-residue protein sequence, read N- to C-terminus: Small ribosomal subunit protein uS3 (239 aa).

The region spanning 39 to 107 (VREFLRKKLA…ATSINIEEIR (69 aa)) is the KH type-2 domain. The segment at 215 to 239 (TSNTNELSDEKRNRRKPRNANRRKE) is disordered. Positions 227–239 (NRRKPRNANRRKE) are enriched in basic residues.

This sequence belongs to the universal ribosomal protein uS3 family. Part of the 30S ribosomal subunit. Forms a tight complex with proteins S10 and S14.

Binds the lower part of the 30S subunit head. Binds mRNA in the 70S ribosome, positioning it for translation. In Dichelobacter nodosus (strain VCS1703A), this protein is Small ribosomal subunit protein uS3.